We begin with the raw amino-acid sequence, 145 residues long: 3-hydroxyacyl-[acyl-carrier-protein] dehydratase FabZ (145 aa).

The active site involves H47.

This sequence belongs to the thioester dehydratase family. FabZ subfamily.

Its subcellular location is the cytoplasm. It catalyses the reaction a (3R)-hydroxyacyl-[ACP] = a (2E)-enoyl-[ACP] + H2O. Involved in unsaturated fatty acids biosynthesis. Catalyzes the dehydration of short chain beta-hydroxyacyl-ACPs and long chain saturated and unsaturated beta-hydroxyacyl-ACPs. The polypeptide is 3-hydroxyacyl-[acyl-carrier-protein] dehydratase FabZ (Geotalea uraniireducens (strain Rf4) (Geobacter uraniireducens)).